A 436-amino-acid polypeptide reads, in one-letter code: Glutamyl-tRNA reductase (436 aa).

Residues T49–R52, S109, E114–Q116, and Q120 each bind substrate. Catalysis depends on C50, which acts as the Nucleophile. NADP(+) is bound at residue G198 to S203.

It belongs to the glutamyl-tRNA reductase family. As to quaternary structure, homodimer.

It catalyses the reaction (S)-4-amino-5-oxopentanoate + tRNA(Glu) + NADP(+) = L-glutamyl-tRNA(Glu) + NADPH + H(+). It participates in porphyrin-containing compound metabolism; protoporphyrin-IX biosynthesis; 5-aminolevulinate from L-glutamyl-tRNA(Glu): step 1/2. It functions in the pathway porphyrin-containing compound metabolism; chlorophyll biosynthesis. Catalyzes the NADPH-dependent reduction of glutamyl-tRNA(Glu) to glutamate 1-semialdehyde (GSA). This is Glutamyl-tRNA reductase from Prochlorococcus marinus (strain MIT 9313).